The following is a 206-amino-acid chain: Interleukin-24 (206 aa).

The first 51 residues, methionine 1–glycine 51, serve as a signal peptide directing secretion. Cysteine 59 and cysteine 106 are disulfide-bonded. Asparagine 85 and asparagine 99 each carry an N-linked (GlcNAc...) asparagine glycan. Lysine 122 is covalently cross-linked (Glycyl lysine isopeptide (Lys-Gly) (interchain with G-Cter in ubiquitin)). Asparagine 126 carries N-linked (GlcNAc...) asparagine glycosylation.

The protein belongs to the IL-10 family. In terms of processing, glycosylated. Ubiquitination at Lys-122 promotes proteasomal degradation. In terms of tissue distribution, up-regulated in melanoma cells induced to terminally differentiate.

Its subcellular location is the secreted. Its function is as follows. Multifunctional cytokine mainly produced by T-cells that plays a regulatory role in immune response, tissue homeostasis, host defense, and oncogenesis. Possesses antiviral functions and induces the type I interferon response during influenza infection. Signals through two receptor complexes IL20RA/IL20RB or IL20RB/IL22RA1. In turn, stimulates the JAK1-STAT3 and MAPK pathways and promotes the secretion of pro-inflammatory mediators including IL8 and MMP1. Intracellularly, maintains endoplasmic reticulum homeostasis by restricting the eIF2alpha-CHOP pathway-mediated stress signal. In addition, acts as a quality control mechanism for the ubiquitin proteasome system by alerting the cell to proteasome dysfunction through activation of PKR/EIF2AK2. The sequence is that of Interleukin-24 (IL24) from Homo sapiens (Human).